A 467-amino-acid chain; its full sequence is Glutamate--tRNA ligase (467 aa).

A 'HIGH' region motif is present at residues 9–19 (PSPTGYLHIGG). Positions 237-241 (KLSKR) match the 'KMSKS' region motif. Lys-240 is an ATP binding site.

Belongs to the class-I aminoacyl-tRNA synthetase family. Glutamate--tRNA ligase type 1 subfamily. In terms of assembly, monomer.

It localises to the cytoplasm. It carries out the reaction tRNA(Glu) + L-glutamate + ATP = L-glutamyl-tRNA(Glu) + AMP + diphosphate. Functionally, catalyzes the attachment of glutamate to tRNA(Glu) in a two-step reaction: glutamate is first activated by ATP to form Glu-AMP and then transferred to the acceptor end of tRNA(Glu). The protein is Glutamate--tRNA ligase of Xanthomonas axonopodis pv. citri (strain 306).